The sequence spans 302 residues: Dehydrodolichyl diphosphate synthase 3 (302 aa).

The protein belongs to the UPP synthase family. The cofactor is Mg(2+).

It functions in the pathway protein modification; protein glycosylation. In terms of biological role, catalyzes cis-prenyl chain elongation to produce the polyprenyl backbone of dolichol, a glycosyl carrier-lipid required for the biosynthesis of several classes of glycoprotein. The protein is Dehydrodolichyl diphosphate synthase 3 of Arabidopsis thaliana (Mouse-ear cress).